The chain runs to 391 residues: MHLIFLLFLAPFCSAAVFQLPTKSTGSLRAKLIRAGKYQEFLITQHAARLNTISQPISDYSDEVYLGNFTVGTPPQPVSLVLDTGSANMWVIDASCDNMFCNGWIGSNYTRQKFDTSKSSSFSRENRKFSIQYGKGLCSGYLGTDTVGLGGGLTIRKQELGIANKLDVDFAVQPMDGIFGLAWPALAVDQITPPMQNLISQLDVPVFSVWLDRKIQASHGGSAGMITYGGIDTKNCDAGVTYVPLTAKTYWQFKMDGFAVGTYSQYGYNQVISDTGSSWISAPYAMINDIATQTHATWDEMNEIYTVKCSTMKTQPDLVFTIGGALFPVKSVEYILDIGLDEGKCALAISPLMASGFGPSWILGDVFIRQYCNIYDIGNARIGFANAHHSF.

The signal sequence occupies residues 1-15 (MHLIFLLFLAPFCSA). A Peptidase A1 domain is found at 65–385 (YLGNFTVGTP…DIGNARIGFA (321 aa)). The N-linked (GlcNAc...) asparagine glycan is linked to Asn-68. The active site involves Asp-83. N-linked (GlcNAc...) asparagine glycosylation occurs at Asn-108. Residue Asp-274 is part of the active site. Residues Cys-309 and Cys-345 are joined by a disulfide bond.

Belongs to the peptidase A1 family. As to expression, expressed in intestinal cells.

The protein localises to the secreted. Its function is as follows. Aspartic proteinase. The polypeptide is Aspartic protease 17 (Caenorhabditis elegans).